Consider the following 543-residue polypeptide: Protein DETOXIFICATION 47, chloroplastic (543 aa).

The transit peptide at 1-30 (MLIKSQRLTLFSPLLSKTRRIPVNSHQTLV) directs the protein to the chloroplast. Positions 55-94 (VIRRRIKLERVTRNCVRIDREIDEEEEEEEKERGDLVKQS) form a coiled coil. 12 helical membrane passes run 107–127 (GPAM…TVVI), 135–155 (LAAL…FMFL), 181–201 (VLLF…RLFG), 228–248 (GLAW…LGMK), 256–276 (ALAA…LFLG), 278–298 (GIAG…YMMM), 319–339 (LWKI…KIAF), 342–362 (FIIY…QVMA), 406–426 (IIGA…PGLF), 443–463 (LLIP…LEGT), 472–492 (FVSS…MFVT), and 497–517 (GLLG…GLYL).

The protein belongs to the multi antimicrobial extrusion (MATE) (TC 2.A.66.1) family. As to expression, preferentially expressed in the epidermal cells.

Its subcellular location is the plastid. The protein localises to the chloroplast membrane. Functionally, functions as a multidrug and toxin extrusion transporter in the export of salicylic acid (SA) from the chloroplast to the cytoplasm. Plays an essential function in plant defense via the pathogen-induced salicylic acid (SA) accumulation. Also acts as a key component of the Age-related resistance (ARR) pathway. In Arabidopsis thaliana (Mouse-ear cress), this protein is Protein DETOXIFICATION 47, chloroplastic.